A 553-amino-acid polypeptide reads, in one-letter code: Formate--tetrahydrofolate ligase (553 aa).

ATP is bound at residue 65 to 72 (TPAGEGKS).

The protein belongs to the formate--tetrahydrofolate ligase family.

The catalysed reaction is (6S)-5,6,7,8-tetrahydrofolate + formate + ATP = (6R)-10-formyltetrahydrofolate + ADP + phosphate. Its pathway is one-carbon metabolism; tetrahydrofolate interconversion. The sequence is that of Formate--tetrahydrofolate ligase from Brachyspira hyodysenteriae (strain ATCC 49526 / WA1).